Here is a 57-residue protein sequence, read N- to C-terminus: High light-inducible protein HliD (57 aa).

The Chlorophyll-binding motif signature appears at Glu25–Arg30. A helical transmembrane segment spans residues Glu25–Thr46.

Belongs to the Hlip family. In terms of assembly, probably forms dimers which bind 6 chlorophyll a and 2 beta-carotenoid molecules. Cofractionates in an approximately 50 kDa fraction of the thylakoid membrane with HliC. Does not associate with mature PSII. Purified in several chlorophyll- and carotenoid-containing complexes, including photosystem II (PSII) assembly intermediate complex RCII* (iD1, D1, D2, PsbE, PsbF, PsbI, Ycf39, Ycf48, HliC and HliD) and the Ycf39-Hlip complex (Ycf39, HliC, HliD and pigments).

Its subcellular location is the cellular thylakoid membrane. Involved in photosystem II (PSII) assembly and/or repair under high light stress. Required for binding of chlorophyll and carotenoids by the Ycf39-Hlip complex. The Ycf39-Hlip complex binds D1 at an early stage of PSII assembly along with Ycf48, ribosomes and ChlG, the last enzyme in chlorophyll biosynthesis; it may be involved in chlorophyll reuse and delivery to D1 in the initial stages of PSII assembly. Binds chlorophyll a and beta-carotenoid in a 3:1 stoichiometry in the presence and absence of Yfc39; in the Ycf39-HliC-HliD complex, HliD binds all the pigment. The Ycf39-Hlip complex efficiently quenches chlorophyll fluorescence, contributing to photoprotection. Deletion of 4 to 5 members of the Hlip family suggests the proteins are involved in regulation of chlorophyll biosynthesis, in stabilization of chlorophyll-binding proteins and/or in reuse of chlorophylls, and may regulate tetrapyrrole biosynthesis. Might bind chlorophyll and/or carotenoids in association with HliC (called the ScpBE pair). Functionally, the Hlips might regulate tetrapyrrole biosynthesis, maybe at the level of aminolevulinic acid synthesis and probably stabilize PSII assembly intermediates. The protein is High light-inducible protein HliD (hliD) of Synechocystis sp. (strain ATCC 27184 / PCC 6803 / Kazusa).